The following is a 178-amino-acid chain: Translation initiation factor IF-3 (178 aa).

Belongs to the IF-3 family. As to quaternary structure, monomer.

The protein resides in the cytoplasm. Its function is as follows. IF-3 binds to the 30S ribosomal subunit and shifts the equilibrium between 70S ribosomes and their 50S and 30S subunits in favor of the free subunits, thus enhancing the availability of 30S subunits on which protein synthesis initiation begins. This Macrococcus caseolyticus (strain JCSC5402) (Macrococcoides caseolyticum) protein is Translation initiation factor IF-3.